The following is a 269-amino-acid chain: Energy-coupling factor transporter ATP-binding protein EcfA1 (269 aa).

Residues 8-242 enclose the ABC transporter domain; sequence IEFKDVSFQY…EEALISVGLD (235 aa). 42-49 is a binding site for ATP; that stretch reads GHNGSGKS.

This sequence belongs to the ABC transporter superfamily. Energy-coupling factor EcfA family. Forms a stable energy-coupling factor (ECF) transporter complex composed of 2 membrane-embedded substrate-binding proteins (S component), 2 ATP-binding proteins (A component) and 2 transmembrane proteins (T component).

It localises to the cell membrane. Its function is as follows. ATP-binding (A) component of a common energy-coupling factor (ECF) ABC-transporter complex. Unlike classic ABC transporters this ECF transporter provides the energy necessary to transport a number of different substrates. The polypeptide is Energy-coupling factor transporter ATP-binding protein EcfA1 (Staphylococcus epidermidis (strain ATCC 35984 / DSM 28319 / BCRC 17069 / CCUG 31568 / BM 3577 / RP62A)).